The following is a 394-amino-acid chain: 5-azacytidine-induced protein 2 (394 aa).

A homodimerization region spans residues 1–197 (MDALVEDDIC…IELRKAKQTD (197 aa)). Coiled coils occupy residues 40-76 (ALVT…LIAR) and 102-196 (DRDN…AKQT). Positions 216–257 (SDNMQHAYWELKREMSNLHLVTQVQAELLRKLKTSTAIKKAC) are interaction with TBK1 and IKBKE. Residues Ser318 and Ser355 each carry the phosphoserine modification. The interval 355-379 (SPPKSSETAFGETKSKTLPLPNLPP) is disordered.

In terms of assembly, homodimer. Interacts with IKBKE, TBK1 and TICAM1. Interacts with TAX1BP1. Interacts with CALCOCO2. Post-translationally, ubiquitinated via 'Lys-48'-linked polyubiquitination by TRIM38, leading to its degradation.

It localises to the cytoplasm. Its function is as follows. Adapter protein which binds TBK1 and IKBKE playing a role in antiviral innate immunity. Activates serine/threonine-protein kinase TBK1 and facilitates its oligomerization. Enhances the phosphorylation of NF-kappa-B p65 subunit RELA by TBK1. Promotes TBK1-induced as well as TNF-alpha or PMA-induced activation of NF-kappa-B. Participates in IFNB promoter activation via TICAM1. This is 5-azacytidine-induced protein 2 (AZI2) from Macaca fascicularis (Crab-eating macaque).